We begin with the raw amino-acid sequence, 279 residues long: NAD kinase (279 aa).

Asp-57 serves as the catalytic Proton acceptor. Residues 57–58 (DG), 133–134 (NE), Arg-159, Asp-161, and 172–177 (TAYNKS) contribute to the NAD(+) site.

The protein belongs to the NAD kinase family. A divalent metal cation is required as a cofactor.

The protein localises to the cytoplasm. The enzyme catalyses NAD(+) + ATP = ADP + NADP(+) + H(+). Functionally, involved in the regulation of the intracellular balance of NAD and NADP, and is a key enzyme in the biosynthesis of NADP. Catalyzes specifically the phosphorylation on 2'-hydroxyl of the adenosine moiety of NAD to yield NADP. This chain is NAD kinase, found in Streptococcus pyogenes serotype M28 (strain MGAS6180).